The sequence spans 227 residues: UPF0758 protein lpg2489 (227 aa).

The MPN domain occupies 102 to 225 (RLSNTQQTYA…YSIFAENKWV (124 aa)). Residues H173, H175, and D186 each coordinate Zn(2+). A JAMM motif motif is present at residues 173-186 (HNHPSGLSDASQQD).

Belongs to the UPF0758 family.

The polypeptide is UPF0758 protein lpg2489 (Legionella pneumophila subsp. pneumophila (strain Philadelphia 1 / ATCC 33152 / DSM 7513)).